The chain runs to 308 residues: Bifunctional protein FolD (308 aa).

170–172 provides a ligand contact to NADP(+); the sequence is GKG.

Belongs to the tetrahydrofolate dehydrogenase/cyclohydrolase family. In terms of assembly, homodimer.

The enzyme catalyses (6R)-5,10-methylene-5,6,7,8-tetrahydrofolate + NADP(+) = (6R)-5,10-methenyltetrahydrofolate + NADPH. It carries out the reaction (6R)-5,10-methenyltetrahydrofolate + H2O = (6R)-10-formyltetrahydrofolate + H(+). Its pathway is one-carbon metabolism; tetrahydrofolate interconversion. Its function is as follows. Catalyzes the oxidation of 5,10-methylenetetrahydrofolate to 5,10-methenyltetrahydrofolate and then the hydrolysis of 5,10-methenyltetrahydrofolate to 10-formyltetrahydrofolate. In Pyrobaculum calidifontis (strain DSM 21063 / JCM 11548 / VA1), this protein is Bifunctional protein FolD.